Reading from the N-terminus, the 607-residue chain is MEDVEVRFAHLLQPIRDLTKNWEVDVAAQLGEYLEELDQICISFDEGKTTMNFIEAALLIQGSACVYSKKVEYLYSLVYQALDFISGKRRAKQLSLVQEDGSKKTVNSETPCETENEFLSLDDFPDSRANVDLKNDQASSELLIIPLLPMALVAPDEVEKNSSPLYSCQGDILASRKDFRMNTCMPNPRGCFMLDPVGMCPVEPVVPVEPYPMSRSQKDPEDAEEQPMEVSRNGSPVPVPDISQEPDGPALSGGEEDAEDGAEPLEVALEPAEPRTSQQSAILPRRYMLRERQGAPEPASRLQETPDPWQSLDPFDSLESKVFQKGKPYSVPPGVEEAPGQKRKRKGATKLQDFHKWYLDAYAEHPDGRRARRKGPTFADMEVLYWKHVKEQLETLQKLRRRKINERWLPGAKQDLWPTEEDRLEESLEDLGVADDFLEPEEYVEEPAGVMPEEAADLDAEAMPESLRYEELVRRNVELFIATSQKFIQETELSQRIRDWEDTIQPLLQEQEQHVPFDIHIYGDQLASRFPQLNEWCPFSELVAGQPAFEVCRSMLASLQLANDYTVEITQQPGLEAAVDTMSLRLLTHQRAHTRFQTYAAPSMAQP.

Residue Thr19 is modified to Phosphothreonine. A phosphoserine mark is found at Ser95, Ser231, Ser235, and Ser252. Disordered regions lie at residues 211–312 and 325–347; these read YPMS…WQSL and KGKP…KRKG. Over residues 254–263 the composition is skewed to acidic residues; it reads GEEDAEDGAE. Ser494 carries the phosphoserine modification.

It belongs to the CND2 H2 (condensin-2 subunit 2) family. In terms of assembly, component of the condensin-2 complex, which contains the SMC2 and SMC4 heterodimer, and three non SMC subunits, NCAPG2, NCAPH2 and NCAPD3 that probably regulate the complex.

The protein localises to the nucleus. Regulatory subunit of the condensin-2 complex, a complex that seems to provide chromosomes with an additional level of organization and rigidity and in establishing mitotic chromosome architecture. May promote the resolution of double-strand DNA catenanes (intertwines) between sister chromatids. Condensin-mediated compaction likely increases tension in catenated sister chromatids, providing directionality for type II topoisomerase-mediated strand exchanges toward chromatid decatenation. Required for decatenation of chromatin bridges at anaphase. Early in neurogenesis, may play an essential role to ensure accurate mitotic chromosome condensation in neuron stem cells, ultimately affecting neuron pool and cortex size. Seems to have lineage-specific role in T-cell development. The polypeptide is Condensin-2 complex subunit H2 (Mus musculus (Mouse)).